The following is a 434-amino-acid chain: 3-phosphoshikimate 1-carboxyvinyltransferase (434 aa).

3-phosphoshikimate-binding residues include lysine 22, serine 23, and arginine 27. A phosphoenolpyruvate-binding site is contributed by lysine 22. Glycine 93 and arginine 121 together coordinate phosphoenolpyruvate. Positions 168, 169, 170, 199, 320, and 347 each coordinate 3-phosphoshikimate. Glutamine 170 is a phosphoenolpyruvate binding site. Catalysis depends on aspartate 320, which acts as the Proton acceptor. The phosphoenolpyruvate site is built by arginine 351, arginine 394, and lysine 419.

The protein belongs to the EPSP synthase family. As to quaternary structure, monomer.

The protein localises to the cytoplasm. It carries out the reaction 3-phosphoshikimate + phosphoenolpyruvate = 5-O-(1-carboxyvinyl)-3-phosphoshikimate + phosphate. Its pathway is metabolic intermediate biosynthesis; chorismate biosynthesis; chorismate from D-erythrose 4-phosphate and phosphoenolpyruvate: step 6/7. Its function is as follows. Catalyzes the transfer of the enolpyruvyl moiety of phosphoenolpyruvate (PEP) to the 5-hydroxyl of shikimate-3-phosphate (S3P) to produce enolpyruvyl shikimate-3-phosphate and inorganic phosphate. The protein is 3-phosphoshikimate 1-carboxyvinyltransferase of Burkholderia multivorans (strain ATCC 17616 / 249).